Reading from the N-terminus, the 488-residue chain is Fumarate hydratase, mitochondrial (488 aa).

A mitochondrion-targeting transit peptide spans 1–24 (MLRFTNCSCKTFVKSSYKLNIRRM). Substrate is bound by residues 124–126 (SGT), 154–157 (HPNN), 164–166 (SSN), and Thr-212. The active-site Proton donor/acceptor is His-213. Ser-343 is an active-site residue. Substrate-binding positions include Ser-344 and 349-351 (KVN). Thr-428 carries the post-translational modification Phosphothreonine.

The protein belongs to the class-II fumarase/aspartase family. Fumarase subfamily. In terms of assembly, homotetramer.

The protein resides in the mitochondrion matrix. The protein localises to the cytoplasm. It is found in the nucleus. The enzyme catalyses (S)-malate = fumarate + H2O. It functions in the pathway carbohydrate metabolism; tricarboxylic acid cycle; (S)-malate from fumarate: step 1/1. Catalyzes the reversible stereospecific interconversion of fumarate to L-malate. In mitochondrion, catalyzes the hydration of fumarate to L-malate in the tricarboxylic acid (TCA) cycle to facilitate a transition step in the production of energy in the form of NADH. In cytoplasm and nucleus, involved in DNA repair in response to DNA damage: following DNA double-strand breaks (DSBs), translocates from the cytosol to the nucleus and promotes DNA repair by catalyzing the dehydration of L-malate to fumarate. In Saccharomyces cerevisiae (strain ATCC 204508 / S288c) (Baker's yeast), this protein is Fumarate hydratase, mitochondrial.